The chain runs to 248 residues: UDP-2,3-diacylglucosamine hydrolase (248 aa).

Mn(2+) contacts are provided by D7, H9, D40, N78, and H113. 78-79 (NR) is a substrate binding site. D121, S159, T163, K166, and H194 together coordinate substrate. 2 residues coordinate Mn(2+): H194 and H196.

The protein belongs to the LpxH family. Mn(2+) serves as cofactor.

The protein resides in the cell inner membrane. The catalysed reaction is UDP-2-N,3-O-bis[(3R)-3-hydroxytetradecanoyl]-alpha-D-glucosamine + H2O = 2-N,3-O-bis[(3R)-3-hydroxytetradecanoyl]-alpha-D-glucosaminyl 1-phosphate + UMP + 2 H(+). It functions in the pathway glycolipid biosynthesis; lipid IV(A) biosynthesis; lipid IV(A) from (3R)-3-hydroxytetradecanoyl-[acyl-carrier-protein] and UDP-N-acetyl-alpha-D-glucosamine: step 4/6. In terms of biological role, hydrolyzes the pyrophosphate bond of UDP-2,3-diacylglucosamine to yield 2,3-diacylglucosamine 1-phosphate (lipid X) and UMP by catalyzing the attack of water at the alpha-P atom. Involved in the biosynthesis of lipid A, a phosphorylated glycolipid that anchors the lipopolysaccharide to the outer membrane of the cell. The chain is UDP-2,3-diacylglucosamine hydrolase from Pseudomonas syringae pv. tomato (strain ATCC BAA-871 / DC3000).